Consider the following 217-residue polypeptide: Ribonuclease T (217 aa).

The Exonuclease domain maps to 20–194 (VVIDIETAGF…YDTQQTANLF (175 aa)). 4 residues coordinate Mg(2+): aspartate 23, glutamate 25, histidine 181, and aspartate 186. Catalysis depends on histidine 181, which acts as the Proton donor/acceptor.

It belongs to the RNase T family. As to quaternary structure, homodimer. The cofactor is Mg(2+).

In terms of biological role, trims short 3' overhangs of a variety of RNA species, leaving a one or two nucleotide 3' overhang. Responsible for the end-turnover of tRNA: specifically removes the terminal AMP residue from uncharged tRNA (tRNA-C-C-A). Also appears to be involved in tRNA biosynthesis. The polypeptide is Ribonuclease T (Buchnera aphidicola subsp. Baizongia pistaciae (strain Bp)).